The primary structure comprises 33 residues: MSDIN-like toxin proprotein 6 (33 aa).

A propeptide spanning residues 1-10 (MSDINATRLP) is cleaved from the precursor. Positions 11-20 (LILLAALGIP) form a cross-link, cyclopeptide (Leu-Pro). A propeptide spanning residues 21 to 33 (SDDADSTLTRGER) is cleaved from the precursor.

The protein belongs to the MSDIN fungal toxin family. Processed by the macrocyclase-peptidase enzyme POPB to yield a toxic cyclic decapeptide. POPB first removes 10 residues from the N-terminus. Conformational trapping of the remaining peptide forces the enzyme to release this intermediate rather than proceed to macrocyclization. The enzyme rebinds the remaining peptide in a different conformation and catalyzes macrocyclization of the N-terminal 10 residues.

Its function is as follows. Probable toxin that belongs to the MSDIN-like toxin family responsible for a large number of food poisoning cases and deaths. This chain is MSDIN-like toxin proprotein 6, found in Amanita phalloides (Death cap).